Reading from the N-terminus, the 98-residue chain is Cytochrome b (98 aa).

A run of 3 helical transmembrane segments spans residues 1–18 (LLGL…FLAM), 42–63 (WLIR…YLHV), and 78–98 (WNIG…GYVL). Heme b is bound by residues H48 and H62.

The protein belongs to the cytochrome b family. As to quaternary structure, the cytochrome bc1 complex contains 3 respiratory subunits (MT-CYB, CYC1 and UQCRFS1), 2 core proteins (UQCRC1 and UQCRC2) and probably 6 low-molecular weight proteins. It depends on heme b as a cofactor.

The protein localises to the mitochondrion inner membrane. Component of the ubiquinol-cytochrome c reductase complex (complex III or cytochrome b-c1 complex) that is part of the mitochondrial respiratory chain. The b-c1 complex mediates electron transfer from ubiquinol to cytochrome c. Contributes to the generation of a proton gradient across the mitochondrial membrane that is then used for ATP synthesis. In Scaphirhynchus platorynchus (Shovelnose sturgeon), this protein is Cytochrome b (mt-cyb).